Reading from the N-terminus, the 172-residue chain is Translation initiation factor IF-3 (172 aa).

This sequence belongs to the IF-3 family. In terms of assembly, monomer.

It is found in the cytoplasm. IF-3 binds to the 30S ribosomal subunit and shifts the equilibrium between 70S ribosomes and their 50S and 30S subunits in favor of the free subunits, thus enhancing the availability of 30S subunits on which protein synthesis initiation begins. The polypeptide is Translation initiation factor IF-3 (Thermotoga maritima (strain ATCC 43589 / DSM 3109 / JCM 10099 / NBRC 100826 / MSB8)).